Here is a 208-residue protein sequence, read N- to C-terminus: Ribosomal RNA large subunit methyltransferase E (208 aa).

5 residues coordinate S-adenosyl-L-methionine: glycine 62, tryptophan 64, aspartate 82, aspartate 98, and aspartate 123. The active-site Proton acceptor is the lysine 163.

Belongs to the class I-like SAM-binding methyltransferase superfamily. RNA methyltransferase RlmE family.

It is found in the cytoplasm. It catalyses the reaction uridine(2552) in 23S rRNA + S-adenosyl-L-methionine = 2'-O-methyluridine(2552) in 23S rRNA + S-adenosyl-L-homocysteine + H(+). Functionally, specifically methylates the uridine in position 2552 of 23S rRNA at the 2'-O position of the ribose in the fully assembled 50S ribosomal subunit. The sequence is that of Ribosomal RNA large subunit methyltransferase E from Actinobacillus succinogenes (strain ATCC 55618 / DSM 22257 / CCUG 43843 / 130Z).